The chain runs to 4644 residues: Cytoplasmic dynein 1 heavy chain 1 (4644 aa).

Ser-2 is subject to N-acetylserine. A stem region spans residues 2 to 1865 (SETGGGEDGS…SIQMANAKFN (1864 aa)). 4 coiled-coil regions span residues 48–69 (AALE…FLSD), 179–200 (SVEK…NIEI), 453–476 (AHRK…QLRA), and 541–564 (TEAW…RITA). Position 68 is a phosphoserine (Ser-68). The interaction with DYNC1I2 stretch occupies residues 446–701 (MVWRINPAHR…NTQEIFDDWA (256 aa)). Residues 649–800 (AKQIDRQLTA…EKVEERNTIS (152 aa)) form an interaction with DYNC1LI2 region. Lys-1123 is modified (N6-acetyllysine). A coiled-coil region spans residues 1169-1201 (TYVQSLKRKIKQFEKQVELYRNGQRLLEKQRFQ). Ser-1228 carries the post-translational modification Phosphoserine. Coiled-coil stretches lie at residues 1229–1250 (AIQQ…AVES) and 1355–1371 (RKLR…LKNF). 4 AAA regions span residues 1866–2097 (YGFE…VLVS), 2178–2450 (EELK…LTRL), 2554–2803 (EVET…WVRG), and 2897–3166 (VFYE…GGRT). Residues 1904 to 1911 (GPAGTGKT) and 2222 to 2229 (GPSGSGKS) each bind ATP. The segment at 2389–2409 (EDEAQRRRKGKEDEGEEAASP) is disordered. ATP is bound by residues 2593–2600 (GPPGSGKT) and 2935–2942 (GVSGAGKT). 3 coiled-coil regions span residues 3187 to 3273 (EKRS…ADKQ), 3394 to 3498 (AIAQ…KNQM), and 3735 to 3798 (EFQL…VSQQ). Residues 3187–3498 (EKRSELEEQQ…KTSETFKNQM (312 aa)) form a stalk region. Lys-3478 is modified (N6-acetyllysine). AAA regions lie at residues 3551–3780 (LSNA…EVTR) and 4003–4219 (AHMF…TVDT). The residue at position 4160 (Ser-4160) is a Phosphoserine. At Lys-4281 the chain carries N6-acetyllysine. A Phosphothreonine modification is found at Thr-4364.

It belongs to the dynein heavy chain family. As to quaternary structure, homodimer. The cytoplasmic dynein 1 complex consists of two catalytic heavy chains (HCs) and a number of non-catalytic subunits presented by intermediate chains (ICs), light intermediate chains (LICs) and light chains (LCs); the composition seems to vary in respect to the IC, LIC and LC composition. The heavy chain homodimer serves as a scaffold for the probable homodimeric assembly of the respective non-catalytic subunits. The ICs and LICs bind directly to the HC dimer and dynein LCs assemble on the IC dimer. Interacts with DYNC1LI1; DYNC1LI1 and DYNC1LI2 bind mutually exclusive to DYNC1H1. Interacts with DYNC1LI2; DYNC1LI1 and DYNC1LI2 bind mutually exclusive to DYNC1H1. Interacts with DYNC1I2. Interacts with BICD2. Interacts with DNALI1.

It is found in the cytoplasm. The protein localises to the cytoskeleton. Its function is as follows. Cytoplasmic dynein 1 acts as a motor for the intracellular retrograde motility of vesicles and organelles along microtubules. Dynein has ATPase activity; the force-producing power stroke is thought to occur on release of ADP. Plays a role in mitotic spindle assembly and metaphase plate congression. This Rattus norvegicus (Rat) protein is Cytoplasmic dynein 1 heavy chain 1 (Dync1h1).